The primary structure comprises 275 residues: Large ribosomal subunit protein uL2 (275 aa).

Residues 224 to 257 (AMNPIDHPHGGGEGRTAAGRDPVSPWGTPTKGFR) form a disordered region.

Belongs to the universal ribosomal protein uL2 family. Part of the 50S ribosomal subunit. Forms a bridge to the 30S subunit in the 70S ribosome.

Its function is as follows. One of the primary rRNA binding proteins. Required for association of the 30S and 50S subunits to form the 70S ribosome, for tRNA binding and peptide bond formation. It has been suggested to have peptidyltransferase activity; this is somewhat controversial. Makes several contacts with the 16S rRNA in the 70S ribosome. The polypeptide is Large ribosomal subunit protein uL2 (Burkholderia mallei (strain NCTC 10247)).